Reading from the N-terminus, the 682-residue chain is Methionine--tRNA ligase (682 aa).

Residues 14 to 24 (PYANGSIHLGH) carry the 'HIGH' region motif. 4 residues coordinate Zn(2+): C145, C148, C158, and C161. Positions 331–335 (KMSKS) match the 'KMSKS' region motif. K334 is an ATP binding site. Residues 580 to 682 (AFAAVDLRVA…SGAKPGQRIK (103 aa)) enclose the tRNA-binding domain.

Belongs to the class-I aminoacyl-tRNA synthetase family. MetG type 1 subfamily. As to quaternary structure, homodimer. Requires Zn(2+) as cofactor.

The protein localises to the cytoplasm. It catalyses the reaction tRNA(Met) + L-methionine + ATP = L-methionyl-tRNA(Met) + AMP + diphosphate. Functionally, is required not only for elongation of protein synthesis but also for the initiation of all mRNA translation through initiator tRNA(fMet) aminoacylation. The protein is Methionine--tRNA ligase of Pseudomonas savastanoi pv. phaseolicola (strain 1448A / Race 6) (Pseudomonas syringae pv. phaseolicola (strain 1448A / Race 6)).